Here is a 582-residue protein sequence, read N- to C-terminus: Peptidyl-prolyl cis-trans isomerase FKBP10 (582 aa).

Residues 1-26 form the signal peptide; the sequence is MFPAGPPSHSLLRLPLLQLLLLVVQA. 3 consecutive PPIase FKBP-type domains span residues 62–150, 174–262, and 286–374; these read GDFV…LDVW, GDFV…IDVH, and GDFM…IDFH. Residues asparagine 70, asparagine 182, asparagine 294, asparagine 310, asparagine 352, asparagine 393, and asparagine 407 are each glycosylated (N-linked (GlcNAc...) asparagine). The 88-residue stretch at 399-486 folds into the PPIase FKBP-type 4 domain; sequence GDFVRYHYNC…LFEVELVSRE (88 aa). EF-hand domains are found at residues 497 to 532 and 542 to 577; these read WHKDPPANLFEDMDLNKDGEVPPEEFSTFIKAQVSE and DPEKTIGDMFQNQDRNQDGKITVDELKLKSDEDEER. Residues aspartate 510, asparagine 512, aspartate 514, glutamate 516, glutamate 521, aspartate 555, asparagine 557, aspartate 559, lysine 561, and glutamate 566 each contribute to the Ca(2+) site. The interval 533–582 is disordered; it reads GKGRLMPGQDPEKTIGDMFQNQDRNQDGKITVDELKLKSDEDEERVHEEL. Over residues 556–582 the composition is skewed to basic and acidic residues; it reads RNQDGKITVDELKLKSDEDEERVHEEL. A Prevents secretion from ER motif is present at residues 579 to 582; sequence HEEL.

Post-translationally, glycosylated and phosphorylated.

It is found in the endoplasmic reticulum lumen. The enzyme catalyses [protein]-peptidylproline (omega=180) = [protein]-peptidylproline (omega=0). Its activity is regulated as follows. Inhibited by both FK506 and rapamycin, but not by cyclosporin A. In terms of biological role, PPIases accelerate the folding of proteins during protein synthesis. The sequence is that of Peptidyl-prolyl cis-trans isomerase FKBP10 (FKBP10) from Homo sapiens (Human).